The following is a 672-amino-acid chain: Glycogen [starch] synthase (672 aa).

Residue K56 participates in UDP-alpha-D-glucose binding. A disordered region spans residues 645–672 (MRDNEGKVPSAATSRRPSIHSSDGEDDE). Residues 655-665 (AATSRRPSIHS) are compositionally biased toward polar residues.

This sequence belongs to the glycosyltransferase 3 family. As to quaternary structure, forms a hetero-octamer with each protomer of the gsy-1 homotetramer bound to one molecule of gyg-1. The N-terminus is involved in interprotomer contacts with gyg-1. The interaction with gyg-1 is required for glycogen production but is not required for gsy-1 intrinsic activity.

It carries out the reaction [(1-&gt;4)-alpha-D-glucosyl](n) + UDP-alpha-D-glucose = [(1-&gt;4)-alpha-D-glucosyl](n+1) + UDP + H(+). Its pathway is glycan biosynthesis; glycogen biosynthesis. Its function is as follows. Transfers the glycosyl residue from UDP-Glc to the non-reducing end of alpha-1,4-glucan. The polypeptide is Glycogen [starch] synthase (Caenorhabditis elegans).